A 1044-amino-acid polypeptide reads, in one-letter code: MVLSLTGLIAFSFLQATLALNPEDPNVCSHWESYAVTVQESYAHPFDQIYYTRCTDILNWFKCTRHRISYKTAYRRGLRTMYRRRSQCCPGYYESGDFCIPLCTEECVHGRCVSPDTCHCEPGWGGPDCSSGCDSDHWGPHCSNRCQCQNGALCNPITGACVCAAGFRGWRCEELCAPGTHGKGCQLPCQCRHGASCDPRAGECLCAPGYTGVYCEELCPPGSHGAHCELRCPCQNGGTCHHITGECACPPGWTGAVCAQPCPPGTFGQNCSQDCPCHHGGQCDHVTGQCHCTAGYMGDRCQEECPFGSFGFQCSQHCDCHNGGQCSPTTGACECEPGYKGPRCQERLCPEGLHGPGCTLPCPCDADNTISCHPVTGACTCQPGWSGHHCNESCPVGYYGDGCQLPCTCQNGADCHSITGGCTCAPGFMGEVCAVSCAAGTYGPNCSSICSCNNGGTCSPVDGSCTCKEGWQGLDCTLPCPSGTWGLNCNESCTCANGAACSPIDGSCSCTPGWLGDTCELPCPDGTFGLNCSEHCDCSHADGCDPVTGHCCCLAGWTGIRCDSTCPPGRWGPNCSVSCSCENGGSCSPEDGSCECAPGFRGPLCQRICPPGFYGHGCAQPCPLCVHSSRPCHHISGICECLPGFSGALCNQVCAGGYFGQDCAQLCSCANNGTCSPIDGSCQCFPGWIGKDCSQACPPGFWGPACFHACSCHNGASCSAEDGACHCTPGWTGLFCTQRCPAAFFGKDCGRVCQCQNGASCDHISGKCTCRTGFTGQHCEQRCAPGTFGYGCQQLCECMNNSTCDHVTGTCYCSPGFKGIRCDQAALMMEELNPYTKISPALGAERHSVGAVTGIMLLLFLIVVLLGLFAWHRRRQKEKGRDLAPRVSYTPAMRMTSTDYSLSGACGMDRRQNTYIMDKGFKDYMKESVCSSSTCSLNSSENPYATIKDPPILTCKLPESSYVEMKSPVHMGSPYTDVPSLSTSNKNIYEVEPTVSVVQEGCGHNSSYIQNAYDLPRNSHIPGHYDLLPVRQSPANGPSQDKQS.

Residues 1 to 19 form the signal peptide; sequence MVLSLTGLIAFSFLQATLA. The Extracellular portion of the chain corresponds to 20-848; it reads LNPEDPNVCS…SPALGAERHS (829 aa). In terms of domain architecture, EMI spans 24–101; it reads DPNVCSHWES…YYESGDFCIP (78 aa). 14 cysteine pairs are disulfide-bonded: Cys28/Cys89, Cys54/Cys63, Cys88/Cys99, Cys103/Cys118, Cys120/Cys129, Cys146/Cys154, Cys148/Cys161, Cys163/Cys172, Cys185/Cys197, Cys191/Cys204, Cys206/Cys215, Cys228/Cys240, Cys234/Cys247, and Cys249/Cys258. EGF-like domains lie at 95-130, 143-173, 181-216, 224-259, 267-302, 310-345, 399-434, 442-477, and 490-520; these read SGDFCIPLCTEECVHGRCVSPDTCHCEPGWGGPDCS, SNRCQCQNGALCNPITGACVCAAGFRGWRCE, HGKGCQLPCQCRHGASCDPRAGECLCAPGYTGVYCE, HGAHCELRCPCQNGGTCHHITGECACPPGWTGAVCA, FGQNCSQDCPCHHGGQCDHVTGQCHCTAGYMGDRCQ, FGFQCSQHCDCHNGGQCSPTTGACECEPGYKGPRCQ, YGDGCQLPCTCQNGADCHSITGGCTCAPGFMGEVCA, YGPNCSSICSCNNGGTCSPVDGSCTCKEGWQGLDCT, and NESCTCANGAACSPIDGSCSCTPGWLGDTCE. Asn270 carries an N-linked (GlcNAc...) asparagine glycan. 15 cysteine pairs are disulfide-bonded: Cys271/Cys283, Cys277/Cys290, Cys292/Cys301, Cys314/Cys326, Cys320/Cys333, Cys335/Cys344, Cys403/Cys415, Cys409/Cys422, Cys424/Cys433, Cys446/Cys458, Cys452/Cys465, Cys467/Cys476, Cys493/Cys501, Cys495/Cys508, and Cys510/Cys519. N-linked (GlcNAc...) asparagine glycosylation is present at Asn531. 5 EGF-like domains span residues 571 to 606, 659 to 694, 707 to 737, 750 to 780, and 788 to 823; these read WGPNCSVSCSCENGGSCSPEDGSCECAPGFRGPLCQ, FGQDCAQLCSCANNGTCSPIDGSCQCFPGWIGKDCS, FHACSCHNGASCSAEDGACHCTPGWTGLFCT, GRVCQCQNGASCDHISGKCTCRTGFTGQHCE, and FGYGCQQLCECMNNSTCDHVTGTCYCSPGFKGIRCD. Intrachain disulfides connect Cys575-Cys587, Cys581-Cys594, Cys596-Cys605, Cys663-Cys675, Cys669-Cys682, Cys684-Cys693, Cys710-Cys718, Cys712-Cys725, Cys727-Cys736, Cys753-Cys761, Cys755-Cys768, Cys770-Cys779, Cys792-Cys804, Cys798-Cys811, and Cys813-Cys822. A helical membrane pass occupies residues 849-869; it reads VGAVTGIMLLLFLIVVLLGLF. The Cytoplasmic segment spans residues 870–1044; it reads AWHRRRQKEK…ANGPSQDKQS (175 aa). The disordered stretch occupies residues 1023-1044; it reads GHYDLLPVRQSPANGPSQDKQS. The segment covering 1033-1044 has biased composition (polar residues); that stretch reads SPANGPSQDKQS.

Belongs to the MEGF family. As to quaternary structure, homomer. Does not interact with MEGF10.

It is found in the cell membrane. Its subcellular location is the basolateral cell membrane. Functionally, may regulate the mosaic spacing of specific neuron subtypes in the retina through homotypic retinal neuron repulsion. Mosaics provide a mechanism to distribute each cell type evenly across the retina, ensuring that all parts of the visual field have access to a full set of processing elements. This is Multiple epidermal growth factor-like domains protein 11 (MEGF11) from Homo sapiens (Human).